Here is a 212-residue protein sequence, read N- to C-terminus: Thymidylate kinase (212 aa).

Residue 11 to 18 participates in ATP binding; it reads GPEGAGKS.

This sequence belongs to the thymidylate kinase family.

The enzyme catalyses dTMP + ATP = dTDP + ADP. Phosphorylation of dTMP to form dTDP in both de novo and salvage pathways of dTTP synthesis. The sequence is that of Thymidylate kinase from Streptococcus sanguinis (strain SK36).